The sequence spans 340 residues: Porphobilinogen deaminase (340 aa).

C258 is modified (S-(dipyrrolylmethanemethyl)cysteine).

The protein belongs to the HMBS family. The cofactor is dipyrromethane.

It catalyses the reaction 4 porphobilinogen + H2O = hydroxymethylbilane + 4 NH4(+). The protein operates within porphyrin-containing compound metabolism; protoporphyrin-IX biosynthesis; coproporphyrinogen-III from 5-aminolevulinate: step 2/4. Its function is as follows. Tetrapolymerization of the monopyrrole PBG into the hydroxymethylbilane pre-uroporphyrinogen in several discrete steps. This Candida albicans (strain SC5314 / ATCC MYA-2876) (Yeast) protein is Porphobilinogen deaminase (HEM3).